A 347-amino-acid chain; its full sequence is 5-deoxyribose 1-phosphate isomerase (347 aa).

Substrate-binding positions include R48–A50, R91, and Q198. D239 functions as the Proton donor in the catalytic mechanism. Substrate is bound at residue N249–K250.

Belongs to the EIF-2B alpha/beta/delta subunits family. DrdI subfamily.

It carries out the reaction 5-deoxy-alpha-D-ribose 1-phosphate = 5-deoxy-D-ribulose 1-phosphate. It participates in carbohydrate degradation. In terms of biological role, catalyzes the isomerization of 5-deoxy-alpha-D-ribose 1-phosphate to 5-deoxy-D-ribulose 1-phosphate, as part of a 5-deoxyribose salvage pathway that recycles this toxic radical SAM enzyme by-product to mainstream metabolites. The sequence is that of 5-deoxyribose 1-phosphate isomerase from Petrotoga mobilis (strain DSM 10674 / SJ95).